A 306-amino-acid polypeptide reads, in one-letter code: Ornithine carbamoyltransferase (306 aa).

Residues 51–54, Gln-78, Arg-102, and 129–132 contribute to the carbamoyl phosphate site; these read STRT and HPVQ. Residues Asn-159, Asp-223, and 227-228 each bind L-ornithine; that span reads SM. Residues 263-264 and Arg-291 contribute to the carbamoyl phosphate site; that span reads CL.

It belongs to the aspartate/ornithine carbamoyltransferase superfamily. OTCase family.

The protein localises to the cytoplasm. The enzyme catalyses carbamoyl phosphate + L-ornithine = L-citrulline + phosphate + H(+). It participates in amino-acid biosynthesis; L-arginine biosynthesis; L-arginine from L-ornithine and carbamoyl phosphate: step 1/3. Its function is as follows. Reversibly catalyzes the transfer of the carbamoyl group from carbamoyl phosphate (CP) to the N(epsilon) atom of ornithine (ORN) to produce L-citrulline. This is Ornithine carbamoyltransferase from Sulfurovum sp. (strain NBC37-1).